The sequence spans 331 residues: Type II secretion system protein K (331 aa).

Residues 1–9 (MPSCRRQGG) constitute a propeptide, leader sequence. The chain crosses the membrane as a helical span at residues 8-27 (GGMALLVVLLILSVMVIIAS). Over 28 to 331 (NMSGRLQLEL…MLRRLNGGAE (304 aa)) the chain is Periplasmic.

Belongs to the GSP K family. Type II secretion is composed of four main components: the outer membrane complex, the inner membrane complex, the cytoplasmic secretion ATPase and the periplasm-spanning pseudopilus. Interacts with core component ExeG. Post-translationally, cleaved by prepilin peptidase.

The protein resides in the cell inner membrane. Component of the type II secretion system required for the energy-dependent secretion of extracellular factors such as proteases and toxins from the periplasm. Plays a role in pseudopilus assembly and seems to control its length. Interacts with the pseudopilus tip complex that is critical for the recognition and binding of secretion substrates. In Aeromonas hydrophila, this protein is Type II secretion system protein K (exeK).